The primary structure comprises 835 residues: Probable RNA-directed RNA polymerase (835 aa).

Belongs to the totiviridae RNA-directed RNA polymerase family.

The enzyme catalyses RNA(n) + a ribonucleoside 5'-triphosphate = RNA(n+1) + diphosphate. In terms of biological role, RNA-dependent RNA polymerase which replicates the viral genome. Catalyzes the transcription of fully conservative plus-strand genomic RNAs that are extruded from the virion into the cytoplasm where they function as mRNAs for translation of viral proteins and also as substrates for encapsidation to form new virions. Once encapsidated, the positive strand is converted to dsRNA by the RNA-directed RNA polymerase. The chain is Probable RNA-directed RNA polymerase from Helminthosporium victoriae virus-190S (Hv190SV).